A 631-amino-acid chain; its full sequence is Leukocyte immunoglobulin-like receptor subfamily B member 3 (631 aa).

A signal peptide spans 1 to 23 (MTPALTALLCLGLSLGPRTRVQA). Residues 24–443 (GPFPKPTLWA…STPGLGRYLE (420 aa)) are Extracellular-facing. Ig-like C2-type domains are found at residues 42–100 (GSPV…RCHY), 111–229 (DPLE…SLLT), 225–314 (PSLL…DPLN), and 338–419 (GENV…LVVS). Cysteine 49 and cysteine 98 are oxidised to a cystine. Residues 59–70 (RLHKEGSPEPLD) are compositionally biased toward basic and acidic residues. Positions 59 to 78 (RLHKEGSPEPLDRNNPLEPK) are disordered. The N-linked (GlcNAc...) asparagine glycan is linked to asparagine 139. 2 cysteine pairs are disulfide-bonded: cysteine 144/cysteine 196 and cysteine 245/cysteine 296. Residues asparagine 280, asparagine 301, and asparagine 340 are each glycosylated (N-linked (GlcNAc...) asparagine). A disulfide bridge links cysteine 345 with cysteine 396. The chain crosses the membrane as a helical span at residues 444-464 (VLIGVSVAFVLLLFLLLFLLL). The Cytoplasmic segment spans residues 465–631 (RRQRHSKHRT…PSIYATLAIH (167 aa)). Positions 470–631 (SKHRTSDQRK…PSIYATLAIH (162 aa)) are disordered. Basic and acidic residues predominate over residues 473–482 (RTSDQRKTDF). An ITIM motif 1 motif is present at residues 512–517 (NLYAAV). Composition is skewed to basic and acidic residues over residues 520 to 537 (TQSEDRVELDSQSPHDED) and 567 to 581 (LDTKDRQVEEDRQMD). A compositionally biased stretch (polar residues) spans 588-600 (EASQDVTYAQLHS). 2 short sequence motifs (ITIM motif) span residues 593-598 (VTYAQL) and 623-628 (SIYATL). 2 positions are modified to phosphotyrosine; by LYN: tyrosine 595 and tyrosine 625.

As to quaternary structure, interacts with LYN, PTPN6/SHP-1 and PTPN11/SHP-2. Post-translationally, phosphorylated on tyrosine residues by LYN. Phosphorylation at Tyr-595 and Tyr-625 is important for interaction with PTPN6/SHP-1 and PTPN11/SHP-2. As to expression, detected in monocytes and B-cells.

The protein resides in the cell membrane. Its function is as follows. May act as receptor for class I MHC antigens. Becomes activated upon coligation of LILRB3 and immune receptors, such as FCGR2B and the B-cell receptor. Down-regulates antigen-induced B-cell activation by recruiting phosphatases to its immunoreceptor tyrosine-based inhibitor motifs (ITIM). The polypeptide is Leukocyte immunoglobulin-like receptor subfamily B member 3 (LILRB3) (Homo sapiens (Human)).